Here is a 344-residue protein sequence, read N- to C-terminus: Aspartate carbamoyltransferase catalytic subunit (344 aa).

A disordered region spans residues 1-30 (MPESPPLPKRSPLMTSSTTRPASDYPPGGD). Positions 88 and 89 each coordinate carbamoyl phosphate. Residue K116 coordinates L-aspartate. Carbamoyl phosphate-binding residues include R138, H166, and Q169. Residues R199 and R253 each coordinate L-aspartate. 2 residues coordinate carbamoyl phosphate: G294 and P295.

This sequence belongs to the aspartate/ornithine carbamoyltransferase superfamily. ATCase family. In terms of assembly, heterododecamer (2C3:3R2) of six catalytic PyrB chains organized as two trimers (C3), and six regulatory PyrI chains organized as three dimers (R2).

The enzyme catalyses carbamoyl phosphate + L-aspartate = N-carbamoyl-L-aspartate + phosphate + H(+). It functions in the pathway pyrimidine metabolism; UMP biosynthesis via de novo pathway; (S)-dihydroorotate from bicarbonate: step 2/3. Functionally, catalyzes the condensation of carbamoyl phosphate and aspartate to form carbamoyl aspartate and inorganic phosphate, the committed step in the de novo pyrimidine nucleotide biosynthesis pathway. The protein is Aspartate carbamoyltransferase catalytic subunit of Sphingopyxis alaskensis (strain DSM 13593 / LMG 18877 / RB2256) (Sphingomonas alaskensis).